Reading from the N-terminus, the 194-residue chain is Putative 3-methyladenine DNA glycosylase (194 aa).

It belongs to the DNA glycosylase MPG family.

This is Putative 3-methyladenine DNA glycosylase from Anaeromyxobacter sp. (strain Fw109-5).